A 284-amino-acid chain; its full sequence is Polyamine aminopropyltransferase (284 aa).

A PABS domain is found at 6-242 (KGWFTEVCKE…GWWSATLAGH (237 aa)). Glutamine 36 contacts S-methyl-5'-thioadenosine. Spermidine contacts are provided by histidine 67 and aspartate 91. S-methyl-5'-thioadenosine is bound by residues glutamate 111 and 142 to 143 (DG). The Proton acceptor role is filled by aspartate 161. Residue 161-164 (DSTD) coordinates spermidine.

Belongs to the spermidine/spermine synthase family. As to quaternary structure, homodimer or homotetramer.

The protein resides in the cytoplasm. It catalyses the reaction S-adenosyl 3-(methylsulfanyl)propylamine + putrescine = S-methyl-5'-thioadenosine + spermidine + H(+). Its pathway is amine and polyamine biosynthesis; spermidine biosynthesis; spermidine from putrescine: step 1/1. In terms of biological role, catalyzes the irreversible transfer of a propylamine group from the amino donor S-adenosylmethioninamine (decarboxy-AdoMet) to putrescine (1,4-diaminobutane) to yield spermidine. This Nitrosococcus oceani (strain ATCC 19707 / BCRC 17464 / JCM 30415 / NCIMB 11848 / C-107) protein is Polyamine aminopropyltransferase.